The chain runs to 4911 residues: MSSEEDKSVEQPQPPPPPPEEPGAPAPSPAAADKRPRGRPRKDGASPFQRARKKPRSRGKTAVEDEDSMDGLETTETETIVETEIKEQSAEEDAEAEVDNSKQLIPTLQRSVSEESANSLVSVGVEAKISEQLCAFCYCGEKSSLGQGDLKQFRITPGFILPWRNQPSNKKDIDDNSNGTYEKMQNSAPRKQRGQRKERSPQQNIVSCVSVSTQTASDDQAGKLWDELSLVGLPDAIDIQALFDSTGTCWAHHRCVEWSLGVCQMEEPLLVNVDKAVVSGSTERCAFCKHLGATIKCCEEKCTQMYHYPCAAGAGTFQDFSHIFLLCPEHIDQAPERSKEDANCAVCDSPGDLLDQFFCTTCGQHYHGMCLDIAVTPLKRAGWQCPECKVCQNCKQSGEDSKMLVCDTCDKGYHTFCLQPVMKSVPTNGWKCKNCRICIECGTRSSSQWHHNCLICDNCYQQQDNLCPFCGKCYHPELQKDMLHCNMCKRWVHLECDKPTDHELDTQLKEEYICMYCKHLGAEMDRLQPGEEVEIAELTTDYNNEMEVEGPEDQMVFSEQAANKDVNGQESTPGIVPDAVQVHTEEQQKSHPSESLDTDSLLIAVSSQHTVNTELEKQISNEVDSEDLKMSSEVKHICGEDQIEDKMEVTENIEVVTHQITVQQEQLQLLEEPETVVSREESRPPKLVMESVTLPLETLVSPHEESISLCPEEQLVIERLQGEKEQKENSELSTGLMDSEMTPTIEGCVKDVSYQGGKSIKLSSETESSFSSSADISKADVSSSPTPSSDLPSHDMLHNYPSALSSSAGNIMPTTYISVTPKIGMGKPAITKRKFSPGRPRSKQGAWSTHNTVSPPSWSPDISEGREIFKPRQLPGSAIWSIKVGRGSGFPGKRRPRGAGLSGRGGRGRSKLKSGIGAVVLPGVSTADISSNKDDEENSMHNTVVLFSSSDKFTLNQDMCVVCGSFGQGAEGRLLACSQCGQCYHPYCVSIKITKVVLSKGWRCLECTVCEACGKATDPGRLLLCDDCDISYHTYCLDPPLQTVPKGGWKCKWCVWCRHCGATSAGLRCEWQNNYTQCAPCASLSSCPVCYRNYREEDLILQCRQCDRWMHAVCQNLNTEEEVENVADIGFDCSMCRPYMPASNVPSSDCCESSLVAQIVTKVKELDPPKTYTQDGVCLTESGMTQLQSLTVTVPRRKRSKPKLKLKIINQNSVAVLQTPPDIQSEHSRDGEMDDSREGELMDCDGKSESSPEREAVDDETKGVEGTDGVKKRKRKPYRPGIGGFMVRQRSRTGQGKTKRSVIRKDSSGSISEQLPCRDDGWSEQLPDTLVDESVSVTESTEKIKKRYRKRKNKLEETFPAYLQEAFFGKDLLDTSRQSKISLDNLSEDGAQLLYKTNMNTGFLDPSLDPLLSSSSAPTKSGTHGPADDPLADISEVLNTDDDILGIISDDLAKSVDHSDIGPVTDDPSSLPQPNVNQSSRPLSEEQLDGILSPELDKMVTDGAILGKLYKIPELGGKDVEDLFTAVLSPANTQPTPLPQPPPPTQLLPIHNQDAFSRMPLMNGLIGSSPHLPHNSLPPGSGLGTFSAIAQSSYPDARDKNSAFNPMASDPNNSWTSSAPTVEGENDTMSNAQRSTLKWEKEEALGEMATVAPVLYTNINFPNLKEEFPDWTTRVKQIAKLWRKASSQERAPYVQKARDNRAALRINKVQMSNDSMKRQQQQDSIDPSSRIDSELFKDPLKQRESEHEQEWKFRQQMRQKSKQQAKIEATQKLEQVKNEQQQQQQQQFGSQHLLVQSGSDTPSSGIQSPLTPQPGNGNMSPAQSFHKELFTKQPPSTPTSTSSDDVFVKPQAPPPPPAPSRIPIQDSLSQAQTSQPPSPQVFSPGSSNSRPPSPMDPYAKMVGTPRPPPVGHSFSRRNSAAPVENCTPLSSVSRPLQMNETTANRPSPVRDLCSSSTTNNDPYAKPPDTPRPVMTDQFPKSLGLSRSPVVSEQTAKGPIAAGTSDHFTKPSPRADVFQRQRIPDSYARPLLTPAPLDSGPGPFKTPMQPPPSSQDPYGSVSQASRRLSVDPYERPALTPRPIDNFSHNQSNDPYSQPPLTPHPAVNESFAHPSRAFSQPGTISRPTSQDPYSQPPGTPRPVVDSYSQSSGTARSNTDPYSQPPGTPRPTTVDPYSQQPQTPRPSTQTDLFVTPVTNQRHSDPYAHPPGTPRPGISVPYSQPPATPRPRISEGFTRSSMTRPVLMPNQDPFLQAAQNRGPALPGPLVRPPDTCSQTPRPPGPGLSDTFSRVSPSAARDPYDQSPMTPRSQSDSFGTSQTAHDVADQPRPGSEGSFCASSNSPMHSQGQQFSGVSQLPGPVPTSGVTDTQNTVNMAQADTEKLRQRQKLREIILQQQQQKKIAGRQEKGSQDSPAVPHPGPLQHWQPENVNQAFTRPPPPYPGNIRSPVAPPLGPRYAVFPKDQRGPYPPDVASMGMRPHGFRFGFPGGSHGTMPSQERFLVPPQQIQGSGVSPQLRRSVSVDMPRPLNNSQMNNPVGLPQHFSPQSLPVQQHNILGQAYIELRHRAPDGRQRLPFSAPPGSVVEASSNLRHGNFIPRPDFPGPRHTDPMRRPPQGLPNQLPVHPDLEQVPPSQQEQGHSVHSSSMVMRTLNHPLGGEFSEAPLSTSVPSETTSDNLQITTQPSDGLEEKLDSDDPSVKELDVKDLEGVEVKDLDDEDLENLNLDTEDGKVVELDTLDNLETNDPNLDDLLRSGEFDIIAYTDPELDMGDKKSMFNEELDLPIDDKLDNQCVSVEPKKKEQENKTLVLSDKHSPQKKSTVTNEVKTEVLSPNSKVESKCETEKNDENKDNVDTPCSQASAHSDLNDGEKTSLHPCDPDLFEKRTNRETAGPSANVIQASTQLPAQDVINSCGITGSTPVLSSLLANEKSDNSDIRPSGSPPPPTLPASPSNHVSSLPPFIAPPGRVLDNAMNSNVTVVSRVNHVFSQGVQVNPGLIPGQSTVNHSLGTGKPATQTGPQTSQSGTSSMSGPQQLMIPQTLAQQNRERPLLLEEQPLLLQDLLDQERQEQQQQRQMQAMIRQRSEPFFPNIDFDAITDPIMKAKMVALKGINKVMAQNNLGMPPMVMSRFPFMGQVVTGTQNSEGQNLGPQAIPQDGSITHQISRPNPPNFGPGFVNDSQRKQYEEWLQETQQLLQMQQKYLEEQIGAHRKSKKALSAKQRTAKKAGREFPEEDAEQLKHVTEQQSMVQKQLEQIRKQQKEHAELIEDYRIKQQQQCAMAPPTMMPSVQPQPPLIPGATPPTMSQPTFPMVPQQLQHQQHTTVISGHTSPVRMPSLPGWQPNSAPAHLPLNPPRIQPPIAQLPIKTCTPAPGTVSNANPQSGPPPRVEFDDNNPFSESFQERERKERLREQQERQRIQLMQEVDRQRALQQRMEMEQHGMVGSEISSSRTSVSQIPFYSSDLPCDFMQPLGPLQQSPQHQQQMGQVLQQQNIQQGSINSPSTQTFMQTNERRQVGPPSFVPDSPSIPVGSPNFSSVKQGHGNLSGTSFQQSPVRPSFTPALPAAPPVANSSLPCGQDSTITHGHSYPGSTQSLIQLYSDIIPEEKGKKKRTRKKKRDDDAESTKAPSTPHSDITAPPTPGISETTSTPAVSTPSELPQQADQESVEPVGPSTPNMAAGQLCTELENKLPNSDFSQATPNQQTYANSEVDKLSMETPAKTEEIKLEKAETESCPGQEEPKLEEQNGSKVEGNAVACPVSSAQSPPHSAGAPAAKGDSGNELLKHLLKNKKSSSLLNQKPEGSICSEDDCTKDNKLVEKQNPAEGLQTLGAQMQGGFGCGNQLPKTDGGSETKKQRSKRTQRTGEKAAPRSKKRKKDEEEKQAMYSSTDTFTHLKQQNNLSNPPTPPASLPPTPPPMACQKMANGFATTEELAGKAGVLVSHEVTKTLGPKPFQLPFRPQDDLLARALAQGPKTVDVPASLPTPPHNNQEELRIQDHCGDRDTPDSFVPSSSPESVVGVEVSRYPDLSLVKEEPPEPVPSPIIPILPSTAGKSSESRRNDIKTEPGTLYFASPFGPSPNGPRSGLISVAITLHPTAAENISSVVAAFSDLLHVRIPNSYEVSSAPDVPSMGLVSSHRINPGLEYRQHLLLRGPPPGSANPPRLVSSYRLKQPNVPFPPTSNGLSGYKDSSHGIAESAALRPQWCCHCKVVILGSGVRKSFKDLTLLNKDSRESTKRVEKDIVFCSNNCFILYSSTAQAKNSENKESIPSLPQSPMRETPSKAFHQYSNNISTLDVHCLPQLPEKASPPASPPIAFPPAFEAAQVEAKPDELKVTVKLKPRLRAVHGGFEDCRPLNKKWRGMKWKKWSIHIVIPKGTFKPPCEDEIDEFLKKLGTSLKPDPVPKDYRKCCFCHEEGDGLTDGPARLLNLDLDLWVHLNCALWSTEVYETQAGALINVELALRRGLQMKCVFCHKTGATSGCHRFRCTNIYHFTCAIKAQCMFFKDKTMLCPMHKPKGIHEQELSYFAVFRRVYVQRDEVRQIASIVQRGERDHTFRVGSLIFHTIGQLLPQQMQAFHSPKALFPVGYEASRLYWSTRYANRRCRYLCSIEEKDGRPVFVIRIVEQGHEDLVLSDISPKGVWDKILEPVACVRKKSEMLQLFPAYLKGEDLFGLTVSAVARIAESLPGVEACENYTFRYGRNPLMELPLAVNPTGCARSEPKMSAHVKRFVLRPHTLNSTSTSKSFQSTVTGELNAPYSKQFVHSKSSQYRKMKTEWKSNVYLARSRIQGLGLYAARDIEKHTMVIEYIGTIIRNEVANRKEKLYESQNRGVYMFRMDNDHVIDATLTGGPARYINHSCAPNCVAEVVTFERGHKIIISSSRRIQKGEELCYDYKFDFEDDQHKIPCHCGAVNCRKWMN.

The interval 1–101 (MSSEEDKSVE…EDAEAEVDNS (101 aa)) is disordered. The segment covering 12–28 (PQPPPPPPEEPGAPAPS) has biased composition (pro residues). A phosphoserine mark is found at Ser-28 and Ser-46. Residues 34 to 46 (KRPRGRPRKDGAS) constitute a DNA-binding region (a.T hook). The span at 50–59 (RARKKPRSRG) shows a compositional bias: basic residues. Over residues 64-81 (EDEDSMDGLETTETETIV) the composition is skewed to acidic residues. Ser-89 bears the Phosphoserine mark. Residues 92-112 (EDAEAEVDNSKQLIPTLQRSV) are a coiled coil. A Phosphoserine modification is found at Ser-113. The disordered stretch occupies residues 164–203 (RNQPSNKKDIDDNSNGTYEKMQNSAPRKQRGQRKERSPQQ). The segment covering 176 to 189 (NSNGTYEKMQNSAP) has biased composition (polar residues). Residue Ser-200 is modified to Phosphoserine. The segment at 227–262 (ELSLVGLPDAIDIQALFDSTGTCWAHHRCVEWSLGV) adopts a C2HC pre-PHD-type 1; degenerate zinc-finger fold. 4 PHD-type zinc fingers span residues 283–331 (ERCA…PEHI), 341–391 (DANC…CKVC), 388–438 (CKVC…CRIC), and 464–520 (DNLC…CKHL). The RING-type zinc-finger motif lies at 344 to 389 (CAVCDSPGDLLDQFFCTTCGQHYHGMCLDIAVTPLKRAGWQCPECK). A DHHC domain is found at 436–489 (RICIECGTRSSSQWHHNCLICDNCYQQQDNLCPFCGKCYHPELQKDMLHCNMCK). Residues 644-672 (EDKMEVTENIEVVTHQITVQQEQLQLLEE) are a coiled coil. Residues 721-730 (QGEKEQKENS) show a composition bias toward basic and acidic residues. The segment at 721 to 742 (QGEKEQKENSELSTGLMDSEMT) is disordered. Lys-758 is subject to N6-acetyllysine. Residues 763 to 791 (SSETESSFSSSADISKADVSSSPTPSSDL) are compositionally biased toward low complexity. Disordered stretches follow at residues 763-798 (SSET…DMLH), 828-864 (PAIT…DISE), and 885-912 (GRGS…RSKL). Over residues 830–842 (ITKRKFSPGRPRS) the composition is skewed to basic residues. The span at 845–856 (GAWSTHNTVSPP) shows a compositional bias: polar residues. Phosphoserine is present on Ser-854. PHD-type zinc fingers lie at residues 957–1010 (QDMC…CTVC), 1007–1057 (CTVC…CVWC), and 1084–1139 (LSSC…CRPY). The tract at residues 1215 to 1324 (AVLQTPPDIQ…LPCRDDGWSE (110 aa)) is disordered. A compositionally biased stretch (basic and acidic residues) spans 1224 to 1270 (QSEHSRDGEMDDSREGELMDCDGKSESSPEREAVDDETKGVEGTDGV). A Phosphoserine modification is found at Ser-1301. Residues 1338–1366 (TESTEKIKKRYRKRKNKLEETFPAYLQEA) are a coiled coil. The segment covering 1406–1416 (PSLDPLLSSSS) has biased composition (low complexity). 2 disordered regions span residues 1406–1431 (PSLD…DDPL) and 1458–1485 (HSDI…PLSE). Positions 1467–1482 (DPSSLPQPNVNQSSRP) are enriched in polar residues. At Lys-1508 the chain carries N6-acetyllysine. 2 disordered regions span residues 1604–1630 (FNPM…DTMS) and 1709–2448 (VQMS…SPVA). Composition is skewed to polar residues over residues 1610–1620 (DPNNSWTSSAP) and 1709–1727 (VQMS…SIDP). The span at 1729-1753 (SRIDSELFKDPLKQRESEHEQEWKF) shows a compositional bias: basic and acidic residues. Residues 1754–1787 (RQQMRQKSKQQAKIEATQKLEQVKNEQQQQQQQQ) are a coiled coil. N6-acetyllysine is present on Lys-1772. Positions 1788–1823 (FGSQHLLVQSGSDTPSSGIQSPLTPQPGNGNMSPAQ) are enriched in polar residues. Residues 1851-1860 (QAPPPPPAPS) show a composition bias toward pro residues. The span at 1861-1875 (RIPIQDSLSQAQTSQ) shows a compositional bias: low complexity. Positions 1927-1945 (TPLSSVSRPLQMNETTANR) are enriched in polar residues. Phosphoserine is present on Ser-1987. Lys-2009 bears the N6-acetyllysine mark. 4 stretches are compositionally biased toward polar residues: residues 2054–2065 (QDPYGSVSQASR), 2085–2094 (FSHNQSNDPY), 2115–2131 (AFSQ…QDPY), and 2144–2159 (SYSQ…TDPY). Positions 2173-2187 (PYSQQPQTPRPSTQT) are enriched in low complexity. Composition is skewed to polar residues over residues 2302–2319 (SPMT…SQTA), 2335–2353 (CASS…SGVS), and 2362–2375 (SGVT…NMAQ). Residues 2377-2389 (DTEKLRQRQKLRE) show a composition bias toward basic and acidic residues. Residues 2390–2399 (IILQQQQQKK) show a composition bias toward low complexity. Residues Arg-2454 and Arg-2571 each carry the asymmetric dimethylarginine modification. 4 disordered regions span residues 2589–2694 (RHGN…SDDP), 2793–2887 (EPKK…RETA), 2925–2954 (EKSD…VSSL), and 2989–3029 (VNPG…SGPQ). 2 stretches are compositionally biased toward polar residues: residues 2629 to 2645 (PPSQ…SSMV) and 2661 to 2682 (PLST…TQPS). Over residues 2793–2811 (EPKKKEQENKTLVLSDKHS) the composition is skewed to basic and acidic residues. 2 positions are modified to N6-acetyllysine: Lys-2802 and Lys-2809. The span at 2814-2832 (KKSTVTNEVKTEVLSPNSK) shows a compositional bias: polar residues. The residue at position 2828 (Ser-2828) is a Phosphoserine. Lys-2832 carries the post-translational modification N6-acetyllysine. Residues 2833–2849 (VESKCETEKNDENKDNV) are compositionally biased toward basic and acidic residues. The span at 2851–2860 (TPCSQASAHS) shows a compositional bias: polar residues. Positions 2861–2884 (DLNDGEKTSLHPCDPDLFEKRTNR) are enriched in basic and acidic residues. Lys-2867 carries the post-translational modification N6-acetyllysine. The span at 3011–3029 (TQTGPQTSQSGTSSMSGPQ) shows a compositional bias: low complexity. 3 coiled-coil regions span residues 3054–3081 (LLQD…QRSE), 3173–3272 (NDSQ…QQQQ), and 3391–3433 (FSES…EMEQ). Positions 3205–3221 (HRKSKKALSAKQRTAKK) are enriched in basic residues. Disordered regions lie at residues 3205-3241 (HRKS…TEQQ), 3353-3409 (PPIA…EQQE), 3527-3583 (PNFS…HSYP), 3596-3919 (IIPE…MANG), and 4024-4053 (VKEE…SRRN). 2 stretches are compositionally biased toward basic and acidic residues: residues 3222–3238 (AGRE…KHVT) and 3395–3409 (FQER…EQQE). Composition is skewed to polar residues over residues 3527–3549 (PNFS…QSPV), 3564–3583 (ANSS…HSYP), 3637–3658 (ISET…QADQ), and 3684–3701 (LPNS…TYAN). Positions 3703-3725 (EVDKLSMETPAKTEEIKLEKAET) are enriched in basic and acidic residues. The residue at position 3714 (Lys-3714) is an N6-acetyllysine. Ser-3758 is modified (phosphoserine). Residues 3803 to 3812 (DCTKDNKLVE) are compositionally biased toward basic and acidic residues. Over residues 3878 to 3892 (MYSSTDTFTHLKQQN) the composition is skewed to polar residues. Residues 3897-3911 (PPTPPASLPPTPPPM) are compositionally biased toward pro residues. At Ser-4034 the chain carries Phosphoserine. Arg-4139 bears the Asymmetric dimethylarginine mark. Ser-4267 carries the phosphoserine modification. The C2HC pre-PHD-type 2 zinc finger occupies 4399 to 4439 (YRKCCFCHEEGDGLTDGPARLLNLDLDLWVHLNCALWSTEV). The PHD-type 8 zinc finger occupies 4460-4507 (MKCVFCHKTGATSGCHRFRCTNIYHFTCAIKAQCMFFKDKTMLCPMHK). The region spanning 4545–4605 (DHTFRVGSLI…CRYLCSIEEK (61 aa)) is the FYR N-terminal domain. The FYR C-terminal domain occupies 4606–4691 (DGRPVFVIRI…EACENYTFRY (86 aa)). Positions 4707-4712 (GCARSE) match the WDR5 interaction motif (WIN) motif. Residues 4771 to 4887 (SNVYLARSRI…KGEELCYDYK (117 aa)) enclose the SET domain. S-adenosyl-L-methionine is bound by residues Tyr-4825 and 4848-4849 (NH). Positions 4851, 4899, 4901, and 4906 each coordinate Zn(2+). Residues 4895–4911 (HKIPCHCGAVNCRKWMN) form the Post-SET domain.

The protein belongs to the class V-like SAM-binding methyltransferase superfamily. Histone-lysine methyltransferase family. TRX/MLL subfamily. In terms of assembly, component of the MLL3 complex (also named ASCOM complex), at least composed of catalytic subunit KMT2C/MLL3, ASH2L, RBBP5, WDR5, NCOA6, DPY30, KDM6A, PAXIP1/PTIP, PAGR1 and alpha- and beta-tubulin. Forms a core complex with the evolutionary conserved subcomplex WRAD composed of WDR5, RBBP5, ASH2L/ASH2 and DPY30 subunits; WRAD differentially stimulates the methyltransferase activity. Interacts (via WIN motif) with WDR5. As to expression, highly expressed in testis and ovary, followed by brain and liver. Also expressed in placenta, peripherical blood, fetal thymus, heart, lung and kidney. Within brain, expression was highest in hippocampus, caudate nucleus, and substantia nigra. Not detected in skeletal muscle and fetal liver.

The protein localises to the nucleus. It catalyses the reaction L-lysyl(4)-[histone H3] + S-adenosyl-L-methionine = N(6)-methyl-L-lysyl(4)-[histone H3] + S-adenosyl-L-homocysteine + H(+). Histone methyltransferase that catalyzes methyl group transfer from S-adenosyl-L-methionine to the epsilon-amino group of 'Lys-4' of histone H3 (H3K4). Part of chromatin remodeling machinery predominantly forms H3K4me1 methylation marks at active chromatin sites where transcription and DNA repair take place. Likely plays a redundant role with KMT2D in enriching H3K4me1 mark on primed and active enhancer elements. The sequence is that of Histone-lysine N-methyltransferase 2C (KMT2C) from Homo sapiens (Human).